A 365-amino-acid polypeptide reads, in one-letter code: Pre-small/secreted glycoprotein (365 aa).

Residues 1 to 32 (MGASGILQLPRERFRKTSFFVWVIILFHKVFS) form the signal peptide. Asparagine 40 is a glycosylation site (N-linked (GlcNAc...) asparagine; by host). 2 cysteine pairs are disulfide-bonded: cysteine 108/cysteine 135 and cysteine 121/cysteine 147. 4 N-linked (GlcNAc...) asparagine; by host glycosylation sites follow: asparagine 204, asparagine 228, asparagine 257, and asparagine 268.

It belongs to the filoviruses glycoprotein family. As to quaternary structure, homodimer; disulfide-linked. The homodimers are linked by two disulfide bonds in a parallel orientation. Monomer. Post-translationally, this precursor is processed into mature sGP and delta-peptide by host furin or furin-like proteases. The cleavage site corresponds to the furin optimal cleavage sequence [KR]-X-[KR]-R. N-glycosylated. In terms of processing, O-glycosylated.

The protein localises to the secreted. Its function is as follows. Seems to possess an anti-inflammatory activity as it can reverse the barrier-decreasing effects of TNF alpha. Might therefore contribute to the lack of inflammatory reaction seen during infection in spite the of extensive necrosis and massive virus production. Does not seem to be involved in activation of primary macrophages. Does not seem to interact specifically with neutrophils. Functionally, viroporin that permeabilizes mammalian cell plasma membranes. It acts by altering permeation of ionic compounds and small molecules. This activity may lead to viral enterotoxic activity. The sequence is that of Pre-small/secreted glycoprotein (GP) from Epomops franqueti (Franquet's epauletted fruit bat).